The primary structure comprises 217 residues: Adenylate kinase (217 aa).

10 to 15 (GAGKGT) contributes to the ATP binding site. The tract at residues 30–59 (STGDMLRAAVKAGTPLGLQAKDIMASGGLV) is NMP. AMP is bound by residues Thr31, Arg36, 57–59 (GLV), 85–88 (GFPR), and Gln92. An LID region spans residues 122-159 (GRRVHEASGRVYHIIHNAPRVEGHDDVTGEPLVQRPDD). ATP contacts are provided by residues Arg123 and 132–133 (VY). AMP is bound by residues Arg156 and Arg167. Residue Gly203 participates in ATP binding.

The protein belongs to the adenylate kinase family. Monomer.

The protein resides in the cytoplasm. The enzyme catalyses AMP + ATP = 2 ADP. Its pathway is purine metabolism; AMP biosynthesis via salvage pathway; AMP from ADP: step 1/1. Catalyzes the reversible transfer of the terminal phosphate group between ATP and AMP. Plays an important role in cellular energy homeostasis and in adenine nucleotide metabolism. This Cellvibrio japonicus (strain Ueda107) (Pseudomonas fluorescens subsp. cellulosa) protein is Adenylate kinase.